The sequence spans 419 residues: UDP-N-acetylglucosamine 1-carboxyvinyltransferase (419 aa).

22–23 contributes to the phosphoenolpyruvate binding site; the sequence is KN. Arg-95 contributes to the UDP-N-acetyl-alpha-D-glucosamine binding site. Cys-119 serves as the catalytic Proton donor. At Cys-119 the chain carries 2-(S-cysteinyl)pyruvic acid O-phosphothioketal. UDP-N-acetyl-alpha-D-glucosamine-binding positions include 164 to 167, Asp-308, and Ile-330; that span reads KVSV.

Belongs to the EPSP synthase family. MurA subfamily.

The protein resides in the cytoplasm. It catalyses the reaction phosphoenolpyruvate + UDP-N-acetyl-alpha-D-glucosamine = UDP-N-acetyl-3-O-(1-carboxyvinyl)-alpha-D-glucosamine + phosphate. It functions in the pathway cell wall biogenesis; peptidoglycan biosynthesis. Its function is as follows. Cell wall formation. Adds enolpyruvyl to UDP-N-acetylglucosamine. This Rickettsia africae (strain ESF-5) protein is UDP-N-acetylglucosamine 1-carboxyvinyltransferase.